The primary structure comprises 186 residues: Protein SPMIP2 (186 aa).

The interval 163–186 (SSLPRASKPPKLPKLPKKEKKRKH) is disordered. The span at 176 to 186 (KLPKKEKKRKH) shows a compositional bias: basic residues.

This Homo sapiens (Human) protein is Protein SPMIP2.